Consider the following 106-residue polypeptide: Cuticle protein CP14.6 (106 aa).

The N-terminal stretch at 1–16 is a signal peptide; sequence MKSFFVVALLVAAAAA. A Chitin-binding type R&amp;R domain is found at 37–106; that stretch reads PQHYSYSVET…PQGAHLPVAA (70 aa).

Component of the cuticle of tobacco hornworm. This chain is Cuticle protein CP14.6 (CP14.6), found in Manduca sexta (Tobacco hawkmoth).